The sequence spans 307 residues: Dihydroorotate dehydrogenase B (NAD(+)), catalytic subunit (307 aa).

Residues Ser-20 and 44–45 (KT) contribute to the FMN site. Substrate is bound by residues Lys-44 and 68-72 (NSIGL). FMN-binding residues include Asn-98 and Asn-126. Substrate is bound at residue Asn-126. Cys-129 functions as the Nucleophile in the catalytic mechanism. Lys-164 and Ile-190 together coordinate FMN. Residue 191–192 (NT) coordinates substrate. FMN-binding positions include Gly-216, 242–243 (GG), and 264–265 (GS).

This sequence belongs to the dihydroorotate dehydrogenase family. Type 1 subfamily. In terms of assembly, heterotetramer of 2 PyrK and 2 PyrD type B subunits. FMN serves as cofactor.

The protein localises to the cytoplasm. The catalysed reaction is (S)-dihydroorotate + NAD(+) = orotate + NADH + H(+). Its pathway is pyrimidine metabolism; UMP biosynthesis via de novo pathway; orotate from (S)-dihydroorotate (NAD(+) route): step 1/1. In terms of biological role, catalyzes the conversion of dihydroorotate to orotate with NAD(+) as electron acceptor. The sequence is that of Dihydroorotate dehydrogenase B (NAD(+)), catalytic subunit (pyrD) from Carboxydothermus hydrogenoformans (strain ATCC BAA-161 / DSM 6008 / Z-2901).